The chain runs to 426 residues: MKQLRLETINKVQGTVNIPGSKSISNRALLLATLAKGTTTLTNLLDSDDIRYMLASLKQLGVNYRLSEDKTVCELDGLGAPINSNVAQTLFLGNAGTAMRPLCAALTLGEGEFILTGEPRMEERPIGDLVDALRQLGAEVTYLKSEGFPPLTINATGLNAGDVEIAGDLSSQFLTALLMVSPLAKGDVNIKIKGELVSKPYIDITLALMAQFGVKVINHDYERFEIKSGQSYVSPGKVLVEGDASSASYFLAAGAIKGGEVKVTGVGRLSIQGDVKFADVLEKMGAEIEWGDDYIISRVAKLNAVDLDMNHIPDAAMTIATAALFATGTTHIRNIYNWRIKETDRLAAMATELRKVGAIVDEGHDYISVTPPTKPHTANIDTYNDHRMAMCFSMLAFADCGITINDPDCTSKTFPDYFEQFAALAC.

The 3-phosphoshikimate site is built by lysine 22, serine 23, and arginine 27. Lysine 22 is a binding site for phosphoenolpyruvate. Positions 96 and 124 each coordinate phosphoenolpyruvate. 3-phosphoshikimate-binding residues include serine 170, serine 171, glutamine 172, serine 198, aspartate 314, asparagine 337, and lysine 341. Residue glutamine 172 coordinates phosphoenolpyruvate. Residue aspartate 314 is the Proton acceptor of the active site. Positions 345, 387, and 412 each coordinate phosphoenolpyruvate.

It belongs to the EPSP synthase family. In terms of assembly, monomer.

The protein localises to the cytoplasm. The catalysed reaction is 3-phosphoshikimate + phosphoenolpyruvate = 5-O-(1-carboxyvinyl)-3-phosphoshikimate + phosphate. Its pathway is metabolic intermediate biosynthesis; chorismate biosynthesis; chorismate from D-erythrose 4-phosphate and phosphoenolpyruvate: step 6/7. Its function is as follows. Catalyzes the transfer of the enolpyruvyl moiety of phosphoenolpyruvate (PEP) to the 5-hydroxyl of shikimate-3-phosphate (S3P) to produce enolpyruvyl shikimate-3-phosphate and inorganic phosphate. This Shewanella woodyi (strain ATCC 51908 / MS32) protein is 3-phosphoshikimate 1-carboxyvinyltransferase.